Reading from the N-terminus, the 762-residue chain is Phospholipase D alpha 4 (762 aa).

The C2 domain maps to 1–116; sequence MELEEQKKYF…VINGFFPLIA (116 aa). Asp172 lines the Ca(2+) pocket. Residues 301–339 enclose the PLD phosphodiesterase 1 domain; it reads TAFAHHQKTITLDTRVTNSSTKEREIMSFLGGFDLCDGR. Active-site residues include His306, Lys308, and Asp313. Residue His306 coordinates a 1,2-diacyl-sn-glycero-3-phosphate. The Ca(2+) site is built by His345 and His377. A 1,2-diacyl-sn-glycero-3-phosphate contacts are provided by Gln477 and His615. Residues 610–637 form the PLD phosphodiesterase 2 domain; that stretch reads FMVYVHSKLMIVDDTYILIGSANINQRS. Residues His615, Lys617, and Asp622 contribute to the active site. Glu671 is a Ca(2+) binding site.

This sequence belongs to the phospholipase D family. C2-PLD subfamily. The cofactor is Ca(2+). As to expression, expressed in roots, leaves, stems, siliques,flowers and inflorescences.

Its subcellular location is the cell membrane. The enzyme catalyses a 1,2-diacyl-sn-glycero-3-phosphocholine + H2O = a 1,2-diacyl-sn-glycero-3-phosphate + choline + H(+). Its function is as follows. Hydrolyzes glycerol-phospholipids at the terminal phosphodiesteric bond to generate phosphatidic acids (PA). Promotes growth and plays a role in nitrogen signaling. The protein is Phospholipase D alpha 4 of Arabidopsis thaliana (Mouse-ear cress).